The chain runs to 1984 residues: Sodium channel protein type 9 subunit alpha (1984 aa).

Topologically, residues methionine 1–histidine 125 are cytoplasmic. A compositionally biased stretch (basic and acidic residues) spans arginine 26 to lysine 39. A disordered region spans residues arginine 26–alanine 55. One copy of the I repeat lies at phenylalanine 112–glutamine 410. A helical membrane pass occupies residues serine 126–methionine 145. Over serine 146–aspartate 150 the chain is Extracellular. A helical membrane pass occupies residues tryptophan 151–leucine 172. The Cytoplasmic segment spans residues alanine 173–arginine 185. The helical transmembrane segment at aspartate 186–phenylalanine 204 threads the bilayer. Over valine 205 to valine 210 the chain is Extracellular. A helical transmembrane segment spans residues serine 211–valine 227. Residues isoleucine 228–serine 241 lie on the Cytoplasmic side of the membrane. Residues valine 242–phenylalanine 267 traverse the membrane as a helical segment. Over methionine 268–threonine 346 the chain is Extracellular. Cysteine 275 and cysteine 324 are joined by a disulfide. The pore-forming intramembrane region spans phenylalanine 347–tryptophan 363. The Extracellular segment spans residues glutamate 364 to lysine 376. Residues threonine 377–alanine 402 traverse the membrane as a helical segment. Positions alanine 402–serine 449 form a coiled coil. Topologically, residues methionine 403 to phenylalanine 744 are cytoplasmic. The segment covering leucine 458 to lysine 471 has biased composition (low complexity). 2 disordered regions span residues leucine 458 to glycine 540 and histidine 574 to proline 609. The span at lysine 474–lysine 486 shows a compositional bias: basic residues. Basic and acidic residues-rich tracts occupy residues serine 489–arginine 509 and histidine 574–arginine 584. Residues leucine 684–lysine 708 adopt a coiled-coil conformation. One copy of the II repeat lies at cysteine 725–glutamine 988. Residues valine 745–alanine 761 traverse the membrane as a helical segment. Topologically, residues methionine 762–glutamate 770 are extracellular. Residues phenylalanine 771–isoleucine 795 form a helical membrane-spanning segment. Over alanine 796–glutamine 804 the chain is Cytoplasmic. A helical membrane pass occupies residues valine 805 to glutamate 821. Over leucine 822–leucine 830 the chain is Extracellular. A helical transmembrane segment spans residues serine 831–serine 847. At tryptophan 848–alanine 864 the chain is on the cytoplasmic side. The chain crosses the membrane as a helical span at residues leucine 865 to phenylalanine 887. Residues glycine 888–histidine 914 are Extracellular-facing. The cysteines at positions 896 and 902 are disulfide-linked. The segment at residues serine 915–tryptophan 927 is an intramembrane region (pore-forming). Topologically, residues isoleucine 928–glycine 939 are extracellular. Cysteine 934 and cysteine 943 form a disulfide bridge. The helical transmembrane segment at glutamine 940–leucine 966 threads the bilayer. Over leucine 967–arginine 1185 the chain is Cytoplasmic. Disordered stretches follow at residues lysine 1015–asparagine 1039 and proline 1089–asparagine 1145. Over residues glycine 1019–asparagine 1035 the composition is skewed to basic and acidic residues. Positions glycine 1135 to asparagine 1145 are enriched in acidic residues. The III repeat unit spans residues threonine 1178 to leucine 1486. Residues isoleucine 1186–glutamate 1210 form a helical membrane-spanning segment. The Extracellular portion of the chain corresponds to aspartate 1211–isoleucine 1222. The chain crosses the membrane as a helical span at residues isoleucine 1223–tyrosine 1248. The Cytoplasmic segment spans residues lysine 1249–threonine 1250. Residues tyrosine 1251 to leucine 1276 form a helical membrane-spanning segment. The Extracellular portion of the chain corresponds to glycine 1277 to lysine 1285. A helical transmembrane segment spans residues serine 1286–phenylalanine 1302. The Cytoplasmic portion of the chain corresponds to glutamate 1303–alanine 1315. A helical transmembrane segment spans residues isoleucine 1316–leucine 1340. The Extracellular portion of the chain corresponds to phenylalanine 1341–leucine 1392. Cysteines 1348 and 1368 form a disulfide. The pore-forming intramembrane region spans glycine 1393–phenylalanine 1403. At lysine 1404–leucine 1429 the chain is on the extracellular side. A helical transmembrane segment spans residues tyrosine 1430–isoleucine 1455. The Cytoplasmic segment spans residues aspartate 1456 to asparagine 1512. Serine 1488 carries the phosphoserine; by PKC modification. An IV repeat occupies isoleucine 1495–glutamine 1793. Residues glutamine 1513 to valine 1532 traverse the membrane as a helical segment. Residues glutamate 1533–phenylalanine 1543 are Extracellular-facing. Residues valine 1544 to isoleucine 1565 form a helical membrane-spanning segment. Over serine 1566–valine 1574 the chain is Cytoplasmic. A helical membrane pass occupies residues glycine 1575 to methionine 1596. Residues isoleucine 1597–threonine 1605 lie on the Extracellular side of the membrane. The chain crosses the membrane as a helical span at residues leucine 1606–alanine 1625. The Cytoplasmic segment spans residues lysine 1626–serine 1638. A helical membrane pass occupies residues leucine 1639–methionine 1661. Topologically, residues serine 1662 to asparagine 1684 are extracellular. Residues serine 1685–glycine 1697 constitute an intramembrane region (pore-forming). Over tryptophan 1698–proline 1731 the chain is Extracellular. A disulfide bridge connects residues cysteine 1713 and cysteine 1728. Residues serine 1732–isoleucine 1757 traverse the membrane as a helical segment. Residues leucine 1758–lysine 1984 are Cytoplasmic-facing. Residues glutamate 1887–lysine 1916 form the IQ domain. The disordered stretch occupies residues aspartate 1933–lysine 1984. Over residues alanine 1946 to serine 1958 the composition is skewed to polar residues. Over residues threonine 1960 to lysine 1984 the composition is skewed to basic and acidic residues.

It belongs to the sodium channel (TC 1.A.1.10) family. Nav1.7/SCN9A subfamily. In terms of assembly, the Nav1.7 voltage-gated sodium channel consists of an ion-conducting alpha subunit SCN9A which is functional on its own regulated by one or more beta-1 (SCN1B), beta-2 (SCN2B), beta-3 (SCN3B) and beta-4 (SCN4B) subunits. SCN1B and SCN3B are non-covalently associated with SCN9A. SCN2B and SCN4B are disulfide-linked to SCN9A. SCN1B regulates channel inactivation. Interacts with NEDD4 and NEDD4L; regulates Nav1.7 activity most probably through ubiquitination and subsequent endocytosis. Interacts with TMEM233; modulates the gating properties of NaV1.7. Ubiquitinated by NEDD4L; which may promote its endocytosis. Post-translationally, phosphorylation at Ser-1488 by PKC in a highly conserved cytoplasmic loop increases peak sodium currents. Expressed strongly in sciatic nerves, with moderate levels in kidney. Not detected in liver, brain and muscle.

It is found in the cell membrane. Its subcellular location is the cell projection. The protein localises to the neuron projection. The protein resides in the axon. The catalysed reaction is Na(+)(in) = Na(+)(out). Pore-forming subunit of Nav1.7, a voltage-gated sodium (Nav) channel that directly mediates the depolarizing phase of action potentials in excitable membranes. Navs, also called VGSCs (voltage-gated sodium channels) or VDSCs (voltage-dependent sodium channels), operate by switching between closed and open conformations depending on the voltage difference across the membrane. In the open conformation they allow Na(+) ions to selectively pass through the pore, along their electrochemical gradient. The influx of Na(+) ions provokes membrane depolarization, initiating the propagation of electrical signals throughout cells and tissues. Nav1.7 plays a crucial role in controlling the excitability and action potential propagation from nociceptor neurons, thereby contributing to the sensory perception of pain. The chain is Sodium channel protein type 9 subunit alpha from Mus musculus (Mouse).